The chain runs to 298 residues: N-acetylmuramic acid 6-phosphate etherase (298 aa).

Residues 55–218 enclose the SIS domain; sequence ITESLRRGGR…STASMVRLGK (164 aa). Glutamate 83 (proton donor) is an active-site residue. Glutamate 114 is a catalytic residue.

Belongs to the GCKR-like family. MurNAc-6-P etherase subfamily. As to quaternary structure, homodimer.

It carries out the reaction N-acetyl-D-muramate 6-phosphate + H2O = N-acetyl-D-glucosamine 6-phosphate + (R)-lactate. It participates in amino-sugar metabolism; N-acetylmuramate degradation. Specifically catalyzes the cleavage of the D-lactyl ether substituent of MurNAc 6-phosphate, producing GlcNAc 6-phosphate and D-lactate. This is N-acetylmuramic acid 6-phosphate etherase from Mycolicibacterium smegmatis (strain ATCC 700084 / mc(2)155) (Mycobacterium smegmatis).